A 1162-amino-acid polypeptide reads, in one-letter code: Leptin receptor (1162 aa).

Positions 1–21 (MMCQKFYVVLLHWEFLYVIAA) are cleaved as a signal peptide. The Extracellular segment spans residues 22 to 839 (LNLAYPISPW…AIDKQQNDAG (818 aa)). 5 disulfides stabilise this stretch: C37-C90, C89-C99, C131-C142, C186-C195, and C188-C193. N-linked (GlcNAc...) asparagine glycans are attached at residues N41, N56, N73, and N98. An N-linked (GlcNAc...) asparagine glycan is attached at N187. The Fibronectin type-III 1 domain maps to 238–331 (PPLGLHMEVT…SPQVFTTQDV (94 aa)). N-linked (GlcNAc...) asparagine glycans are attached at residues N275 and N345. Positions 329–427 (QDVVYFPPKI…HRYAELYVID (99 aa)) constitute an Ig-like domain. 2 disulfide bridges follow: C350-C410 and C411-C416. N431 is a glycosylation site (N-linked (GlcNAc...) asparagine). 3 disulfide bridges follow: C434–C445, C471–C526, and C486–C496. The segment at 465 to 482 (HRRSLYCPDSPSIHPTSE) is leptin-binding. 8 N-linked (GlcNAc...) asparagine glycosylation sites follow: N514, N622, N657, N668, N686, N695, N698, and N726. Fibronectin type-III domains are found at residues 537–632 (PPSN…TLVM), 637–729 (PMRG…NLTF), and 738–832 (AVES…DAID). The WSXWS motif motif lies at 620 to 624 (WSNWS). Residues 840 to 860 (LYVIVPIIISSCVLLLGTLLI) form a helical membrane-spanning segment. Topologically, residues 861–1162 (SHQRMKKLFW…MENKMCDLTV (302 aa)) are cytoplasmic. The Box 1 motif motif lies at 869–877 (FWDDVPNPK). The residue at position 880 (S880) is a Phosphoserine. The interval 891–896 (ETFEHL) is required for JAK2 activation. Positions 896 to 904 (LFTKHAESV) are required for STAT3 phosphorylation. Residue Y985 is modified to Phosphotyrosine; by JAK2. Y1077 is subject to Phosphotyrosine. A Phosphotyrosine; by JAK2 modification is found at Y1138.

The protein belongs to the type I cytokine receptor family. Type 2 subfamily. As to quaternary structure, present as a mixture of monomers and dimers. The phosphorylated receptor binds a number of SH2 domain-containing proteins such as JAK2, STAT3, PTPN11, and SOCS3. Interaction with SOCS3 inhibits JAK/STAT signaling and MAPK cascade. In terms of processing, on ligand binding, phosphorylated on two conserved C-terminal tyrosine residues (isoform B only) by JAK2. Tyr-985 is required for complete binding and activation of PTPN11, ERK/FOS activation,for interaction with SOCS3 and SOCS3 mediated inhibition of leptin signaling. Phosphorylation on Tyr-1138 is required for STAT3 binding/activation. Phosphorylation of Tyr-1077 has a more accessory role. In terms of tissue distribution, isoform A: highest level of expression in lung and kidney, also present in heart, brain, spleen, liver, muscle, choroid plexus and hypothalamus. Isoform B: highest levels of expression in hypothalamus and lower levels in brain, testes and adipose tissue. Expressed by neurons of the parabrachial nucleus. Expressed by peripheral blood mononuclear cells and CD4(+) T-cells. Isoform E: expressed in adipose tissue, liver, hypothalamus, cerebral microvessels, heart, and testes.

The protein resides in the cell membrane. Its subcellular location is the basolateral cell membrane. It localises to the secreted. Receptor for hormone LEP/leptin. On ligand binding, mediates LEP central and peripheral effects through the activation of different signaling pathways such as JAK2/STAT3 and MAPK cascade/FOS. In the hypothalamus, LEP acts as an appetite-regulating factor that induces a decrease in food intake and an increase in energy consumption by inducing anorexinogenic factors and suppressing orexigenic neuropeptides, also regulates bone mass and secretion of hypothalamo-pituitary-adrenal hormones. In the periphery, increases basal metabolism, influences reproductive function, regulates pancreatic beta-cell function and insulin secretion, is pro-angiogenic and affects innate and adaptive immunity. Control of energy homeostasis and melanocortin production (stimulation of POMC and full repression of AgRP transcription) is mediated by STAT3 signaling, whereas distinct signals regulate NPY and the control of fertility, growth and glucose homeostasis. Involved in the regulation of counter-regulatory response to hypoglycemia by inhibiting neurons of the parabrachial nucleus. Has a specific effect on T lymphocyte responses, differentially regulating the proliferation of naive and memory T-cells. Leptin increases Th1 and suppresses Th2 cytokine production. In terms of biological role, may transport LEP across the blood-brain barrier. Binds LEP and mediates LEP endocytosis. Does not induce phosphorylation of and activate STAT3. Functionally, antagonizes Isoform A and isoform B-mediated LEP binding and endocytosis. This chain is Leptin receptor (Lepr), found in Mus musculus (Mouse).